The chain runs to 420 residues: Inheritance of peroxisomes protein 1 (420 aa).

The segment covering 1–10 (MVLSRGETKK) has biased composition (basic and acidic residues). Disordered regions lie at residues 1–75 (MVLS…QRKR) and 273–309 (SLSD…NYDD). Over residues 30–39 (LKQSLKLSNN) the composition is skewed to low complexity. Positions 45–56 (DSTQHSNDTNKS) are enriched in polar residues. S273 carries the post-translational modification Phosphoserine. The segment covering 295–309 (NNDDDNDDDDDNYDD) has biased composition (acidic residues).

The protein belongs to the INP1 family. As to quaternary structure, interacts with PEX25, PEX30 and VPS1.

It localises to the peroxisome membrane. In terms of biological role, required for peroxisome inheritance. This is Inheritance of peroxisomes protein 1 (INP1) from Saccharomyces cerevisiae (strain ATCC 204508 / S288c) (Baker's yeast).